We begin with the raw amino-acid sequence, 757 residues long: Endonuclease MutS2 (757 aa).

Residue 321 to 328 (GPNMGGKT) coordinates ATP. The Smr domain maps to 681 to 756 (IDIRGMTVEE…GTGVTVVEVE (76 aa)).

It belongs to the DNA mismatch repair MutS family. MutS2 subfamily. As to quaternary structure, homodimer. Binds to stalled ribosomes, contacting rRNA.

Its function is as follows. Endonuclease that is involved in the suppression of homologous recombination and thus may have a key role in the control of bacterial genetic diversity. Acts as a ribosome collision sensor, splitting the ribosome into its 2 subunits. Detects stalled/collided 70S ribosomes which it binds and splits by an ATP-hydrolysis driven conformational change. Acts upstream of the ribosome quality control system (RQC), a ribosome-associated complex that mediates the extraction of incompletely synthesized nascent chains from stalled ribosomes and their subsequent degradation. Probably generates substrates for RQC. This Thermotoga neapolitana (strain ATCC 49049 / DSM 4359 / NBRC 107923 / NS-E) protein is Endonuclease MutS2.